Reading from the N-terminus, the 87-residue chain is Small ribosomal subunit protein uS15 (87 aa).

It belongs to the universal ribosomal protein uS15 family. Part of the 30S ribosomal subunit. Forms a bridge to the 50S subunit in the 70S ribosome, contacting the 23S rRNA.

In terms of biological role, one of the primary rRNA binding proteins, it binds directly to 16S rRNA where it helps nucleate assembly of the platform of the 30S subunit by binding and bridging several RNA helices of the 16S rRNA. Its function is as follows. Forms an intersubunit bridge (bridge B4) with the 23S rRNA of the 50S subunit in the ribosome. In Ruminiclostridium cellulolyticum (strain ATCC 35319 / DSM 5812 / JCM 6584 / H10) (Clostridium cellulolyticum), this protein is Small ribosomal subunit protein uS15.